Here is a 200-residue protein sequence, read N- to C-terminus: THO complex subunit tho5 (200 aa).

The protein belongs to the THOC5 family. Component of the THO and TREX complexes.

Its subcellular location is the cytoplasm. The protein resides in the nucleus. Functionally, component the THO subcomplex of the TREX complex, which operates in coupling transcription elongation to mRNA export. The THO complex is recruited to transcribed genes and moves along the gene with the elongating polymerase during transcription. THO is important for stabilizing nascent RNA in the RNA polymerase II elongation complex by preventing formation of DNA:RNA hybrids behind the elongating polymerase. The THO complex is also required to maintain TRAMP complex occupancy at sites of snoRNA transcription thus promoting exosome-mediated degradation of snoRNA precursors. This chain is THO complex subunit tho5, found in Schizosaccharomyces pombe (strain 972 / ATCC 24843) (Fission yeast).